Here is a 446-residue protein sequence, read N- to C-terminus: Glutamine synthetase (446 aa).

A GS beta-grasp domain is found at 18–103 (ENVRYLRLQF…LICDVYKTDG (86 aa)). A GS catalytic domain is found at 110-446 (PRANLKRVLK…WERDQYMKQY (337 aa)). Residues Glu-134 and Glu-136 each contribute to the Mg(2+) site. Glu-186 is a binding site for ATP. 2 residues coordinate Mg(2+): Glu-191 and Glu-198. Residues 242-243 (NG) and Gly-243 contribute to the L-glutamate site. Residue His-247 participates in Mg(2+) binding. Ser-251 contributes to the ATP binding site. 3 residues coordinate L-glutamate: Arg-300, Glu-306, and Arg-318. ATP-binding residues include Arg-318 and Arg-323. Glu-335 lines the Mg(2+) pocket. Arg-337 contributes to the L-glutamate binding site.

This sequence belongs to the glutamine synthetase family. In terms of assembly, oligomer of 12 subunits arranged in the form of two hexagons. In its feedback-inhibited form, interacts with TnrA in order to block its DNA-binding activity. Requires Mg(2+) as cofactor.

The protein localises to the cytoplasm. The catalysed reaction is L-glutamate + NH4(+) + ATP = L-glutamine + ADP + phosphate + H(+). With respect to regulation, inhibited by glutamine. Glutamine synthetase (GS) is an unusual multitasking protein that functions as an enzyme, a transcription coregulator, and a chaperone in ammonium assimilation and in the regulation of genes involved in nitrogen metabolism. It catalyzes the ATP-dependent biosynthesis of glutamine from glutamate and ammonia. Feedback-inhibited GlnA also interacts with and regulates the activity of the transcriptional regulator TnrA. During nitrogen limitation, TnrA is in its DNA-binding active state and turns on the transcription of genes required for nitrogen assimilation. Under conditions of nitrogen excess, feedback-inhibited GlnA forms a stable complex with TnrA, which inhibits its DNA-binding activity. In contrast, feedback-inhibited GlnA acts as a chaperone to stabilize the DNA-binding activity of GlnR, which represses the transcription of nitrogen assimilation genes. This is Glutamine synthetase from Staphylococcus aureus (strain MSSA476).